Reading from the N-terminus, the 446-residue chain is T-box transcription factor TBX19 (446 aa).

The segment at residues 43-216 is a DNA-binding region (T-box); sequence LEDAPLWQRF…YNPFAKAFLD (174 aa).

It localises to the nucleus. In terms of biological role, transcriptional regulator involved in developmental processes. Can activate POMC gene expression and repress the alpha glycoprotein subunit and thyroid-stimulating hormone beta promoters. This chain is T-box transcription factor TBX19, found in Mus musculus (Mouse).